A 172-amino-acid chain; its full sequence is Ribosome maturation factor RimM (172 aa).

The region spanning 96-168 (EGEFYYHQII…RVDVELMEGL (73 aa)) is the PRC barrel domain.

It belongs to the RimM family. In terms of assembly, binds ribosomal protein uS19.

The protein resides in the cytoplasm. An accessory protein needed during the final step in the assembly of 30S ribosomal subunit, possibly for assembly of the head region. Essential for efficient processing of 16S rRNA. May be needed both before and after RbfA during the maturation of 16S rRNA. It has affinity for free ribosomal 30S subunits but not for 70S ribosomes. In Streptococcus pyogenes serotype M6 (strain ATCC BAA-946 / MGAS10394), this protein is Ribosome maturation factor RimM.